Consider the following 20-residue polypeptide: KCGVSIPYKISPSTDCSSVK.

This sequence belongs to the plant LTP family. Leaf.

Functionally, plant non-specific lipid-transfer proteins transfer phospholipids as well as galactolipids across membranes. May play a role in wax or cutin deposition in the cell walls of expanding epidermal cells and certain secretory tissues. The polypeptide is Non-specific lipid-transfer protein (Cannabis sativa (Hemp)).